The primary structure comprises 292 residues: NAD kinase (292 aa).

The active-site Proton acceptor is the D73. Residues 73–74, 147–148, H158, R175, D177, 188–193, and Q247 each bind NAD(+); these read DG, NE, and TAYSLS.

It belongs to the NAD kinase family. It depends on a divalent metal cation as a cofactor.

It localises to the cytoplasm. It carries out the reaction NAD(+) + ATP = ADP + NADP(+) + H(+). In terms of biological role, involved in the regulation of the intracellular balance of NAD and NADP, and is a key enzyme in the biosynthesis of NADP. Catalyzes specifically the phosphorylation on 2'-hydroxyl of the adenosine moiety of NAD to yield NADP. This Sodalis glossinidius (strain morsitans) protein is NAD kinase.